Here is a 275-residue protein sequence, read N- to C-terminus: MSSTPSNQNIIPLIKKESIVSLFEKGTRQDGRKLTDYRPLSITLNYAKKADGSALVKLGTTMVLAGTKLEIDKPYEDTPNQGNLIVNVELLPLAYETFEPGPPDENAIELARVVDRSLRDSKALDLTKLVIEPGKSVWTVWLDVYVLDYGGNVLDACTLASVAALYNTKVYKVEQDSNGFRVNKNEVVGKLPLNHPVVTVSIAKVDKYLIVDPDLDEESIMDTKVSFSYTPDLKIVGIQKSGKGSMSLQDIDQAENTARLVAVKLLEELKKQLGI.

This sequence belongs to the RNase PH family. Rrp42 subfamily. In terms of assembly, component of the archaeal exosome complex. Forms a hexameric ring-like arrangement composed of 3 Rrp41-Rrp42 heterodimers. The hexameric ring associates with a trimer of Rrp4 and/or Csl4 subunits.

The protein localises to the cytoplasm. In terms of biological role, non-catalytic component of the exosome, which is a complex involved in RNA degradation. Contributes to the structuring of the Rrp41 active site. The polypeptide is Exosome complex component Rrp42 (Saccharolobus islandicus (strain Y.N.15.51 / Yellowstone #2) (Sulfolobus islandicus)).